The primary structure comprises 680 residues: MDRQFKRTLITTALPYANGPVHIGHLAGVYVPADIYARYLRLRGRDCLLIGGSDEHGVPIALKAKAEGCTPQEVVDRYHELIKRSFEGLGISFDIYSRTTSDIHRRTASEFFKTLYEKGEFVEQTSEQYYDEEAKQFLADRYIIGTCPHCSNDRAYGDQCEACGTSLNATDLIDPRSTISGSAPVLRETKHWYLPLDKHEPFLKEWILDGHKEWKSNVYGQCKSWLDMGLQPRAVSRDLDWGIPVPVEGAEGKVLYVWFDAPIGYISNTKELCPDSWETWWKSEDTRLVHFIGKDNIVFHCIVFPAMLRAEGSFILPDNVPANEFLNLEGDKISTSRNWAVWLHEYLEEFPGKQDVLRYVLTANAPETKDNDFTWRDFQARNNNELVAIFGNFVNRALVLTHKYFDGAVPPKGELTDYDSRTIEEFAAVKQALEHQLDTFHFREALKEAMNLARIGNKYLADTEPWKLAKTDMNRVATILNLSLQITANLAIAFEPFLPFSSAKLMSMLSTDCPFGWDRLGSTDLLPEGHVLGNPELLFEKLEDSVIDAQIQKLQDTKLANEKAAHQAAPIAEDIAFEDFLKLDIRVGTVLECEKVPKADKLLRFRIDDGLGGRTIVSGIAKHYAPEELVGKQVCFIANLPPRKLKGIESEGMILSAEDADGSLRVIMPAAEVAPGSQVK.

Residues 15-25 carry the 'HIGH' region motif; that stretch reads PYANGPVHIGH. Cysteine 147, cysteine 150, cysteine 160, and cysteine 163 together coordinate Zn(2+). The 'KMSKS' region motif lies at 332–336; the sequence is KISTS. Threonine 335 is an ATP binding site. Residues 579-680 form the tRNA-binding domain; the sequence is DFLKLDIRVG…AEVAPGSQVK (102 aa).

It belongs to the class-I aminoacyl-tRNA synthetase family. MetG type 1 subfamily. As to quaternary structure, homodimer. Zn(2+) is required as a cofactor.

Its subcellular location is the cytoplasm. It carries out the reaction tRNA(Met) + L-methionine + ATP = L-methionyl-tRNA(Met) + AMP + diphosphate. Is required not only for elongation of protein synthesis but also for the initiation of all mRNA translation through initiator tRNA(fMet) aminoacylation. The sequence is that of Methionine--tRNA ligase from Porphyromonas gingivalis (strain ATCC 33277 / DSM 20709 / CIP 103683 / JCM 12257 / NCTC 11834 / 2561).